Reading from the N-terminus, the 502-residue chain is Glycerol kinase (502 aa).

T14 is an ADP binding site. ATP-binding residues include T14 and T15. T14 contributes to the sn-glycerol 3-phosphate binding site. R18 serves as a coordination point for ADP. Sn-glycerol 3-phosphate contacts are provided by R84, E85, Y136, and D245. Residues R84, E85, Y136, D245, and Q246 each coordinate glycerol. ADP is bound by residues T267 and G314. The ATP site is built by T267, G314, Q318, and G415. G415 and N419 together coordinate ADP.

It belongs to the FGGY kinase family.

It catalyses the reaction glycerol + ATP = sn-glycerol 3-phosphate + ADP + H(+). It functions in the pathway polyol metabolism; glycerol degradation via glycerol kinase pathway; sn-glycerol 3-phosphate from glycerol: step 1/1. Its activity is regulated as follows. Inhibited by fructose 1,6-bisphosphate (FBP). Functionally, key enzyme in the regulation of glycerol uptake and metabolism. Catalyzes the phosphorylation of glycerol to yield sn-glycerol 3-phosphate. The sequence is that of Glycerol kinase from Acaryochloris marina (strain MBIC 11017).